The sequence spans 94 residues: Large ribosomal subunit protein uL23 (94 aa).

Belongs to the universal ribosomal protein uL23 family. Part of the 50S ribosomal subunit. Contacts protein L29, and trigger factor when it is bound to the ribosome.

In terms of biological role, one of the early assembly proteins it binds 23S rRNA. One of the proteins that surrounds the polypeptide exit tunnel on the outside of the ribosome. Forms the main docking site for trigger factor binding to the ribosome. This is Large ribosomal subunit protein uL23 from Exiguobacterium sibiricum (strain DSM 17290 / CCUG 55495 / CIP 109462 / JCM 13490 / 255-15).